Consider the following 107-residue polypeptide: Putative double-stranded DNA mimic protein HI_1450 (107 aa).

Belongs to the putative dsDNA mimic protein family. In terms of assembly, monomer in solution. Interacts with the DNA-binding protein HU.

Functionally, may act as a double-stranded DNA (dsDNA) mimic. Probably regulates the activity of the DNA-binding protein HU. The sequence is that of Putative double-stranded DNA mimic protein HI_1450 from Haemophilus influenzae (strain ATCC 51907 / DSM 11121 / KW20 / Rd).